The chain runs to 1147 residues: SR-related and CTD-associated factor 4 (1147 aa).

In terms of domain architecture, CID spans 1 to 139; it reads MDAVNAFNQE…PLLDMAAGTS (139 aa). An N6-acetyllysine modification is found at Lys49. Disordered regions lie at residues 145–179, 235–254, 269–331, and 424–502; these read AENV…AVPQ, KTTP…PEQK, DEPE…QQPA, and VKRH…KPET. Phosphoserine is present on Ser154. Low complexity-rich tracts occupy residues 283-292 and 299-310; these read TAVTTTAPAA and TATVPAAAAPAA. Basic and acidic residues predominate over residues 424–433; the sequence is VKRHMSDNRK. The segment covering 434–475 has biased composition (basic residues); that stretch reads SRSRSASRSPKRRRSRSGSRSRRSRHRRSRSRSRDRRRHSPR. Positions 477–492 are enriched in basic and acidic residues; the sequence is RSQERRDREKERERRQ. The RRM domain occupies 508–582; it reads TTLWVGQLDK…KSIKIAWALN (75 aa). Disordered regions lie at residues 629–661 and 879–1147; these read DWKG…IPKP and RPMP…EAPR. Position 656 is a phosphoserine (Ser656). Residues 879-913 are compositionally biased toward pro residues; the sequence is RPMPPHMMHRGPPPGPGGFAMPPPHGMKGPFPPHG. The span at 941–965 shows a compositional bias: low complexity; that stretch reads QQPPQQPQQQPQPQAPQQPQQQQQQ. Over residues 966-977 the composition is skewed to pro residues; sequence QPPPSQQPPPTQ. Residue Ser1004 is modified to Phosphoserine. A compositionally biased stretch (basic and acidic residues) spans 1009 to 1085; that stretch reads VENDRERYGN…RGKEKPEVTD (77 aa).

As to quaternary structure, interacts with POLR2A; via C-terminal heptapeptide repeat domain (CTD) phosphorylated at 'Ser-2' and 'Ser-5'.

It is found in the nucleus. In terms of biological role, anti-terminator protein required to prevent early mRNA termination during transcription. Together with SCAF8, acts by suppressing the use of early, alternative poly(A) sites, thereby preventing the accumulation of non-functional truncated proteins. Mechanistically, associates with the phosphorylated C-terminal heptapeptide repeat domain (CTD) of the largest RNA polymerase II subunit (POLR2A), and subsequently binds nascent RNA upstream of early polyadenylation sites to prevent premature mRNA transcript cleavage and polyadenylation. Independently of SCAF8, also acts as a suppressor of transcriptional readthrough. This Homo sapiens (Human) protein is SR-related and CTD-associated factor 4.